An 86-amino-acid polypeptide reads, in one-letter code: KASVLITLAVLGVMFVWTSAAELEERGSDQRDSPALIKSMAKVFQSEERECTKLLGGCTKDSECCPHLGCRKKWPYHCGWDGTFGK.

A signal peptide spans 1-20 (KASVLITLAVLGVMFVWTSA). Positions 21 to 49 (AELEERGSDQRDSPALIKSMAKVFQSEER) are excised as a propeptide. Intrachain disulfides connect Cys-51/Cys-65, Cys-58/Cys-70, and Cys-64/Cys-78. Phe-84 is subject to Phenylalanine amide.

This sequence belongs to the neurotoxin 10 (Hwtx-1) family. 47 subfamily. As to expression, expressed by the venom gland.

The protein resides in the secreted. Functionally, inhibits TTX-sensitive and TTX-insensitive sodium currents (IC(50) is 0.6 uM and 0.95 uM respectively) on rat dorsal root ganglion (DRG) neurons. Inhibits muscular subtypes sodium channels Nav1.4/SCN4A and Nav1.5/SCN5A transiently transfected in to HEK293 cells (IC(50) is 5.42 uM and 0.45 uM respectively). Also blocks Kv2.1/KCNB1 potassium channels expressed in X.laevis oocytes with an IC(50) of 604 nM. Injection of the toxin in mice was immediately followed by general ataxia, lack of response to stimuli and semiparalysis. The polypeptide is U18-theraphotoxin-Cg1a (Chilobrachys guangxiensis (Chinese earth tiger tarantula)).